We begin with the raw amino-acid sequence, 369 residues long: Homoserine O-acetyltransferase (369 aa).

The region spanning 44–350 is the AB hydrolase-1 domain; that stretch reads NAILVAHAWT…AYGHDAFLLE (307 aa). Ser-150 (nucleophile) is an active-site residue. Residue Arg-217 coordinates substrate. Active-site residues include Asp-311 and His-344. Asp-345 contacts substrate.

This sequence belongs to the AB hydrolase superfamily. MetX family. Homodimer.

The protein localises to the cytoplasm. The enzyme catalyses L-homoserine + acetyl-CoA = O-acetyl-L-homoserine + CoA. The protein operates within amino-acid biosynthesis; L-methionine biosynthesis via de novo pathway; O-acetyl-L-homoserine from L-homoserine: step 1/1. Transfers an acetyl group from acetyl-CoA to L-homoserine, forming acetyl-L-homoserine. The sequence is that of Homoserine O-acetyltransferase from Geobacter metallireducens (strain ATCC 53774 / DSM 7210 / GS-15).